The primary structure comprises 513 residues: Activin receptor type-2A (513 aa).

The N-terminal stretch at 1–19 (MGAAAKLAFAVFLISCSSG) is a signal peptide. The Extracellular segment spans residues 20-135 (AILGRSETQE…TSNPVTPKPP (116 aa)). 5 disulfide bridges follow: Cys30–Cys60, Cys50–Cys78, Cys85–Cys104, Cys91–Cys103, and Cys105–Cys110. Asn43 and Asn66 each carry an N-linked (GlcNAc...) asparagine glycan. Residues 136–161 (YYNILLYSLVPLMLIAGIVICAFWVY) form a helical membrane-spanning segment. Topologically, residues 162–513 (RHHMMAYPPV…VDFPPKESSL (352 aa)) are cytoplasmic. Residues 192-485 (LQLLEVKARG…GERITQMQRL (294 aa)) form the Protein kinase domain. ATP is bound by residues 198–206 (KARGRFGCV) and Lys219. Catalysis depends on Asp322, which acts as the Proton acceptor.

Belongs to the protein kinase superfamily. TKL Ser/Thr protein kinase family. TGFB receptor subfamily. In terms of assembly, part of a complex consisting of MAGI2/ARIP1, ACVR2A, ACVR1B and SMAD3. Interacts with MAGI2/ARIP1. Interacts with type I receptor ACVR1. Interacts with BMP7. Interacts with TSC22D1/TSC-22. Interacts with activin A/INHBA. It depends on Mg(2+) as a cofactor. Mn(2+) serves as cofactor.

Its subcellular location is the cell membrane. It catalyses the reaction L-threonyl-[receptor-protein] + ATP = O-phospho-L-threonyl-[receptor-protein] + ADP + H(+). The enzyme catalyses L-seryl-[receptor-protein] + ATP = O-phospho-L-seryl-[receptor-protein] + ADP + H(+). On ligand binding, forms a receptor complex consisting of two type II and two type I transmembrane serine/threonine kinases. Type II receptors phosphorylate and activate type I receptors which autophosphorylate, then bind and activate SMAD transcriptional regulators. Receptor for activin A, activin B and inhibin A. Mediates induction of adipogenesis by GDF6. This Rattus norvegicus (Rat) protein is Activin receptor type-2A.